The primary structure comprises 288 residues: Protease HtpX (288 aa).

2 consecutive transmembrane segments (helical) span residues 4-24 (ILLF…ILTL) and 33-53 (VGLL…SLLM). H139 serves as a coordination point for Zn(2+). Residue E140 is part of the active site. H143 is a binding site for Zn(2+). A run of 2 helical transmembrane segments spans residues 146 to 166 (SGDM…VIFI) and 186 to 206 (IYFM…SMIA). E214 provides a ligand contact to Zn(2+).

The protein belongs to the peptidase M48B family. Zn(2+) serves as cofactor.

The protein resides in the cell inner membrane. The sequence is that of Protease HtpX from Histophilus somni (strain 2336) (Haemophilus somnus).